Consider the following 50-residue polypeptide: DCASGPCCRDCKFLKEGTICKRARGDNMDDYCNGKTCDCPRNPHKGEHDP.

Positions 1–47 (DCASGPCCRDCKFLKEGTICKRARGDNMDDYCNGKTCDCPRNPHKGE) constitute a Disintegrin domain. 4 disulfides stabilise this stretch: Cys2-Cys11, Cys7-Cys32, Cys8-Cys37, and Cys20-Cys39. The Cell attachment site motif lies at 24–26 (RGD).

It belongs to the venom metalloproteinase (M12B) family. P-II subfamily. P-IIa sub-subfamily. As to quaternary structure, monomer (disintegrin). In terms of tissue distribution, expressed by the venom gland.

Its subcellular location is the secreted. Inhibits ADP-induced human platelet aggregation. This Echis pyramidum leakeyi (Leakey's carpet viper) protein is Disintegrin pyramidin-A.